Consider the following 339-residue polypeptide: ATP-dependent 6-phosphofructokinase (339 aa).

Residues Gly11, 72–73, and 102–105 each bind ATP; these read RY and GDGS. Asp103 contacts Mg(2+). Substrate is bound by residues 125-127, Arg162, and 169-171; these read TID and MGR. The active-site Proton acceptor is the Asp127. ADP is bound by residues 185 to 187 and 214 to 216; these read GAD and KSH. Substrate is bound by residues Glu223, Arg245, and 251 to 254; that span reads HVIR.

Belongs to the phosphofructokinase type A (PFKA) family. ATP-dependent PFK group I subfamily. Prokaryotic clade 'B1' sub-subfamily. Homotetramer. The cofactor is Mg(2+).

It localises to the cytoplasm. The enzyme catalyses beta-D-fructose 6-phosphate + ATP = beta-D-fructose 1,6-bisphosphate + ADP + H(+). It functions in the pathway carbohydrate degradation; glycolysis; D-glyceraldehyde 3-phosphate and glycerone phosphate from D-glucose: step 3/4. With respect to regulation, allosterically activated by ADP and other diphosphonucleosides, and allosterically inhibited by phosphoenolpyruvate. Catalyzes the phosphorylation of D-fructose 6-phosphate to fructose 1,6-bisphosphate by ATP, the first committing step of glycolysis. This is ATP-dependent 6-phosphofructokinase from Streptococcus thermophilus (strain ATCC BAA-491 / LMD-9).